We begin with the raw amino-acid sequence, 179 residues long: Large ribosomal subunit protein uL5 (179 aa).

It belongs to the universal ribosomal protein uL5 family. As to quaternary structure, part of the 50S ribosomal subunit; part of the 5S rRNA/L5/L18/L25 subcomplex. Contacts the 5S rRNA and the P site tRNA. Forms a bridge to the 30S subunit in the 70S ribosome.

In terms of biological role, this is one of the proteins that bind and probably mediate the attachment of the 5S RNA into the large ribosomal subunit, where it forms part of the central protuberance. In the 70S ribosome it contacts protein S13 of the 30S subunit (bridge B1b), connecting the 2 subunits; this bridge is implicated in subunit movement. Contacts the P site tRNA; the 5S rRNA and some of its associated proteins might help stabilize positioning of ribosome-bound tRNAs. The protein is Large ribosomal subunit protein uL5 of Dehalococcoides mccartyi (strain ATCC BAA-2266 / KCTC 15142 / 195) (Dehalococcoides ethenogenes (strain 195)).